The primary structure comprises 486 residues: MITTEIKRVKNHINGEWVESTGTEVEAVPNPATGKIIAYVPLSPKEDVERAVEAAKNAYETWSKVPVPNRSRMLYKYLQLLQENKDELSKIITLENGKTLKDASGEVQRGIEAVELATSAPNLMMGQALPNIAGGIDGSIWRYPLGVVAGITPFNFPMMIPLWMFPLAIACGNTFVLKTSERTPLLAERLVELFYEAGFPKGVLNLVQGGKEVVNSILENKEIQAVSFVGSEPVARYVYETGTKYGKRVQALAGAKNHAIVMPDCNLEKTVQGVIGSAFGSSGERCMACSVVAVLDEIADEFIDALVSETRKLKVGDGFHEENYVGPLIRESHKERVIGYINSGVADGASLLVDGRQIKEDVEGGYFVGATIFDGVNQNMKIWQDEIFAPVLSIVRVRDLEEGIQLTNQSKFANGAVIYTSSGKHAQTFRDHIDAGMIGVNVNVPAPMAFFAFAGNKASFYGDLGTNGKDGVQFYTRKKVVTERWF.

Residues Phe-154, Lys-178, Glu-181, Arg-182, and Ser-231 each coordinate NAD(+). The active-site Nucleophile is the Cys-286. Glu-386 is a binding site for NAD(+).

Belongs to the aldehyde dehydrogenase family. IolA subfamily. In terms of assembly, homotetramer.

It catalyses the reaction 3-oxopropanoate + NAD(+) + CoA + H2O = hydrogencarbonate + acetyl-CoA + NADH + H(+). The enzyme catalyses 2-methyl-3-oxopropanoate + NAD(+) + CoA + H2O = propanoyl-CoA + hydrogencarbonate + NADH + H(+). It functions in the pathway polyol metabolism; myo-inositol degradation into acetyl-CoA; acetyl-CoA from myo-inositol: step 7/7. Catalyzes the oxidation of malonate semialdehyde (MSA) and methylmalonate semialdehyde (MMSA) into acetyl-CoA and propanoyl-CoA, respectively. Is involved in a myo-inositol catabolic pathway. Bicarbonate, and not CO2, is the end-product of the enzymatic reaction. In Bacillus cytotoxicus (strain DSM 22905 / CIP 110041 / 391-98 / NVH 391-98), this protein is Malonate-semialdehyde dehydrogenase.